We begin with the raw amino-acid sequence, 136 residues long: MASIAASASISLQARPRQLAIAASQVKSFSNGRRSSLSFNLRQLPTRLTVSCAAKPETVDKVCAVVRKQLSLKEADEITAATKFAALGADSLDTVEIVMGLEEEFGIEMAEEKAQSIATVEQAAALIEELLFEKAK.

A chloroplast-targeting transit peptide spans Met1–Ser51. Positions Pro56–Leu131 constitute a Carrier domain. Ser91 carries the post-translational modification O-(pantetheine 4'-phosphoryl)serine.

It belongs to the acyl carrier protein (ACP) family. 4'-phosphopantetheine is transferred from CoA to a specific serine of apo-ACP by acpS. This modification is essential for activity because fatty acids are bound in thioester linkage to the sulfhydryl of the prosthetic group.

It localises to the plastid. It is found in the chloroplast. Its function is as follows. Carrier of the growing fatty acid chain in fatty acid biosynthesis. In Arabidopsis thaliana (Mouse-ear cress), this protein is Acyl carrier protein 2, chloroplastic (ACP2).